Consider the following 160-residue polypeptide: MKLQVLPLSQEAFSAYGDVIETQQRDFFHINNGLVERYHDLALVEILEQDCTLISINRAQPANLPLTIHELERHPLGTQAFIPMKGEVFVVVVALGDDKPDLSTLRAFITNGEQGVNYHRNVWHHPLFAWQRVTDFLTIDRGGSDNCDVESIPEQELCFA.

Belongs to the ureidoglycolate lyase family. As to quaternary structure, homodimer. Ni(2+) is required as a cofactor.

It catalyses the reaction (S)-ureidoglycolate = urea + glyoxylate. It functions in the pathway nitrogen metabolism; (S)-allantoin degradation. Its function is as follows. Catalyzes the catabolism of the allantoin degradation intermediate (S)-ureidoglycolate, generating urea and glyoxylate. Involved in the anaerobic utilization of allantoin as sole nitrogen source. Reinforces the induction of genes involved in the degradation of allantoin and glyoxylate by producing glyoxylate. In Escherichia coli (strain K12 / MC4100 / BW2952), this protein is Ureidoglycolate lyase.